Consider the following 269-residue polypeptide: Putative biopolymer transport protein ExbD (269 aa).

Topologically, residues 1 to 40 (MASSPKAPKSHRKFQSIYHPTRPLSLWQDNQHDQGEVRIE) are cytoplasmic. The helical transmembrane segment at 41-61 (IIPLIDVVFCILTFFILGAVG) threads the bilayer. The Periplasmic portion of the chain corresponds to 62 to 269 (LSRQQAISLD…GNTVPSAPQQ (208 aa)). A disordered region spans residues 190-269 (NGANPGMSNF…GNTVPSAPQQ (80 aa)). Over residues 193-204 (NPGMSNFNNSNP) the composition is skewed to low complexity.

This sequence belongs to the ExbD/TolR family.

The protein localises to the cell inner membrane. The polypeptide is Putative biopolymer transport protein ExbD (Synechocystis sp. (strain ATCC 27184 / PCC 6803 / Kazusa)).